The sequence spans 408 residues: Histone acetyltransferase type B subunit 2 (408 aa).

5 WD repeats span residues 120–160 (KHEQ…KDHG), 167–207 (YHKE…NKSP), 213–253 (VHTD…AIQK), 255–295 (SVSS…KPLH), and 299–339 (GHED…AEQQ). The segment at 341-345 (DDAYD) is interaction with the histone H4 N-terminus. One copy of the WD 6 repeat lies at 356 to 396 (GHRSPVNEFSHNSNVPWLMCSVEEENVLQIWKPANKIVRPP).

Belongs to the WD repeat RBAP46/RBAP48/MSI1 family. As to quaternary structure, component of the HAT-B complex composed of at least HAT1 and HAT2. The HAT-B complex binds to histone H4 tail.

It is found in the cytoplasm. The protein resides in the nucleus. Functionally, regulatory subunit of the histone acetylase B (HAT-B) complex. The complex acetylates 'Lys-12' of histone H4 which is required for telomeric silencing. The sequence is that of Histone acetyltransferase type B subunit 2 (HAT2) from Kluyveromyces lactis (strain ATCC 8585 / CBS 2359 / DSM 70799 / NBRC 1267 / NRRL Y-1140 / WM37) (Yeast).